Reading from the N-terminus, the 476-residue chain is PRAME family member 6 (476 aa).

An LRR 1; degenerate repeat occupies 97 to 124 (RWKLQVLDLQDVCENFWMVWSEAMARGC). An LRR 2; degenerate repeat occupies 179-203 (HLCCKKLKILGMPFRNIRSILKMVN). Residues 204–230 (LDCIQEVEVNCKWVLPILTQFTPYLGH) form an LRR 3; degenerate repeat. An LRR 4; degenerate repeat occupies 231-266 (MRNLQKLVLSHMDVSRYVSPEQKKEIVTQFTTQFLK). 5 LRR repeats span residues 267-292 (LCCL…LSCL), 293-324 (KTSL…SQLK), 325-345 (TLDL…QILL), 349-376 (AATL…ALSR), and 377-401 (CFEL…LLSH).

It belongs to the PRAME family. In terms of assembly, component of a CRL2 E3 ubiquitin-protein ligase complex, also named ECS (Elongin BC-CUL2/5-SOCS-box protein) complex, composed of CUL2, Elongin BC (ELOB and ELOC), RBX1 and substrate-specific adapter PRAMEF6.

It participates in protein modification; protein ubiquitination. In terms of biological role, substrate-recognition component of a Cul2-RING (CRL2) E3 ubiquitin-protein ligase complex, which mediates ubiquitination of target proteins, leading to their degradation. The CRL2(PRAMEF6) complex mediates ubiquitination and degradation of truncated MSRB1/SEPX1 selenoproteins produced by failed UGA/Sec decoding. The polypeptide is PRAME family member 6 (Homo sapiens (Human)).